The sequence spans 122 residues: Antitoxin protein TsiV3 (122 aa).

Positions 1–24 are cleaved as a signal peptide; sequence MNNLLSAYVTMLLILLSISGGAIA. 2 disulfide bridges follow: C28/C41 and C82/C100.

In terms of assembly, homodimer; dimerization is critical for inhibitory activity. Forms a heterotetramer with VgrG3 composed of one TsiV3 homodimer and two VgrG3 molecules.

Its function is as follows. Immunity protein that plays a role in preventing early activation of toxin VgrG3. This is Antitoxin protein TsiV3 from Vibrio cholerae serotype O1 (strain ATCC 39315 / El Tor Inaba N16961).